We begin with the raw amino-acid sequence, 275 residues long: MKIANFEVGNGKPFFLMSGPCVIESEQMAMDTAGYLAEVTKDLGINFVYKSSFDKANRSSINSFRGLGVDKGLEILAKVKKTYNVPVVTDVHEDTPFAEVAEVVDVLQIPAFLCRQTNFILEVCKQGKPVNIKKGQFLAPWDMQHVVTKAKSTGNEQIMVCERGVSFGYNNLVSDMRSLEIMKATGCPVVFDATHSVQLPGGQGSSSGGQREFVPVLSKAAMAVGIDGLFMETHPNPDEAKSDGPNSFPMYKIKEFLSLLKELDHLVKSQPKTEL.

Belongs to the KdsA family.

It is found in the cytoplasm. The enzyme catalyses D-arabinose 5-phosphate + phosphoenolpyruvate + H2O = 3-deoxy-alpha-D-manno-2-octulosonate-8-phosphate + phosphate. The protein operates within carbohydrate biosynthesis; 3-deoxy-D-manno-octulosonate biosynthesis; 3-deoxy-D-manno-octulosonate from D-ribulose 5-phosphate: step 2/3. Its pathway is bacterial outer membrane biogenesis; lipopolysaccharide biosynthesis. The polypeptide is 2-dehydro-3-deoxyphosphooctonate aldolase (Francisella tularensis subsp. holarctica (strain LVS)).